Here is a 151-residue protein sequence, read N- to C-terminus: Histone H2A.2.1 (151 aa).

N-acetylmethionine is present on Met1. Disordered stretches follow at residues 1–22 (MDGS…KKSV) and 129–151 (EKAE…PKKA). 2 short sequence motifs (SPKK motif) span residues 140–143 (SPKK) and 147–150 (SPKK). Over residues 140 to 151 (SPKKTTKSPKKA) the composition is skewed to basic residues.

The protein belongs to the histone H2A family. As to quaternary structure, the nucleosome is a histone octamer containing two molecules each of H2A, H2B, H3 and H4 assembled in one H3-H4 heterotetramer and two H2A-H2B heterodimers. The octamer wraps approximately 147 bp of DNA. Phosphorylated within its C-terminal part, probably at the SPKK motifs.

It localises to the nucleus. Its subcellular location is the chromosome. Its function is as follows. Core component of nucleosome. Nucleosomes wrap and compact DNA into chromatin, limiting DNA accessibility to the cellular machineries which require DNA as a template. Histones thereby play a central role in transcription regulation, DNA repair, DNA replication and chromosomal stability. DNA accessibility is regulated via a complex set of post-translational modifications of histones, also called histone code, and nucleosome remodeling. The protein is Histone H2A.2.1 of Triticum aestivum (Wheat).